Here is a 155-residue protein sequence, read N- to C-terminus: 6,7-dimethyl-8-ribityllumazine synthase (155 aa).

5-amino-6-(D-ribitylamino)uracil contacts are provided by residues Phe23, 57-59, and 81-83; these read AFE and AVI. A (2S)-2-hydroxy-3-oxobutyl phosphate-binding site is contributed by 86-87; that stretch reads ST. Residue His89 is the Proton donor of the active site. Phe114 lines the 5-amino-6-(D-ribitylamino)uracil pocket. Residue Arg128 participates in (2S)-2-hydroxy-3-oxobutyl phosphate binding.

The protein belongs to the DMRL synthase family.

The enzyme catalyses (2S)-2-hydroxy-3-oxobutyl phosphate + 5-amino-6-(D-ribitylamino)uracil = 6,7-dimethyl-8-(1-D-ribityl)lumazine + phosphate + 2 H2O + H(+). Its pathway is cofactor biosynthesis; riboflavin biosynthesis; riboflavin from 2-hydroxy-3-oxobutyl phosphate and 5-amino-6-(D-ribitylamino)uracil: step 1/2. Its function is as follows. Catalyzes the formation of 6,7-dimethyl-8-ribityllumazine by condensation of 5-amino-6-(D-ribitylamino)uracil with 3,4-dihydroxy-2-butanone 4-phosphate. This is the penultimate step in the biosynthesis of riboflavin. This Dehalococcoides mccartyi (strain ATCC BAA-2266 / KCTC 15142 / 195) (Dehalococcoides ethenogenes (strain 195)) protein is 6,7-dimethyl-8-ribityllumazine synthase.